The chain runs to 304 residues: HTH-type transcriptional activator CmpR (304 aa).

Residues 1 to 61 (MKNATLHQFE…EQIGRKIYLT (61 aa)) form the HTH lysR-type domain. Residues 21–40 (FTKAAEELFLTQPTVSQQMK) constitute a DNA-binding region (H-T-H motif).

The protein belongs to the LysR transcriptional regulatory family.

It localises to the cytoplasm. Functionally, activates transcription of the cmpABCD operon under carbon dioxide-limited conditions. Specifically binds to the cmpR-cmpA intergenic region. This chain is HTH-type transcriptional activator CmpR (cmpR), found in Synechocystis sp. (strain ATCC 27184 / PCC 6803 / Kazusa).